The sequence spans 448 residues: Bifunctional protein GlmU (448 aa).

Positions 1–232 (MSERSLLVVV…VDEVAGVNSR (232 aa)) are pyrophosphorylase. UDP-N-acetyl-alpha-D-glucosamine is bound by residues 11–14 (LAAG), K25, Q78, and 83–84 (GT). Residue D108 coordinates Mg(2+). UDP-N-acetyl-alpha-D-glucosamine contacts are provided by G144, E158, N173, and N230. N230 contributes to the Mg(2+) binding site. Residues 233 to 253 (LQLAEAEAILQGRLRRAAMAG) are linker. Residues 254-448 (GATLVAPETV…LRAARGKPKV (195 aa)) are N-acetyltransferase. UDP-N-acetyl-alpha-D-glucosamine is bound by residues R319 and K337. H349 (proton acceptor) is an active-site residue. Residues Y352 and N363 each contribute to the UDP-N-acetyl-alpha-D-glucosamine site. Acetyl-CoA contacts are provided by residues A366, 372–373 (NY), S409, and R426.

In the N-terminal section; belongs to the N-acetylglucosamine-1-phosphate uridyltransferase family. It in the C-terminal section; belongs to the transferase hexapeptide repeat family. Homotrimer. The cofactor is Mg(2+).

The protein localises to the cytoplasm. The enzyme catalyses alpha-D-glucosamine 1-phosphate + acetyl-CoA = N-acetyl-alpha-D-glucosamine 1-phosphate + CoA + H(+). It carries out the reaction N-acetyl-alpha-D-glucosamine 1-phosphate + UTP + H(+) = UDP-N-acetyl-alpha-D-glucosamine + diphosphate. It participates in nucleotide-sugar biosynthesis; UDP-N-acetyl-alpha-D-glucosamine biosynthesis; N-acetyl-alpha-D-glucosamine 1-phosphate from alpha-D-glucosamine 6-phosphate (route II): step 2/2. The protein operates within nucleotide-sugar biosynthesis; UDP-N-acetyl-alpha-D-glucosamine biosynthesis; UDP-N-acetyl-alpha-D-glucosamine from N-acetyl-alpha-D-glucosamine 1-phosphate: step 1/1. Its pathway is bacterial outer membrane biogenesis; LPS lipid A biosynthesis. Catalyzes the last two sequential reactions in the de novo biosynthetic pathway for UDP-N-acetylglucosamine (UDP-GlcNAc). The C-terminal domain catalyzes the transfer of acetyl group from acetyl coenzyme A to glucosamine-1-phosphate (GlcN-1-P) to produce N-acetylglucosamine-1-phosphate (GlcNAc-1-P), which is converted into UDP-GlcNAc by the transfer of uridine 5-monophosphate (from uridine 5-triphosphate), a reaction catalyzed by the N-terminal domain. The protein is Bifunctional protein GlmU of Azorhizobium caulinodans (strain ATCC 43989 / DSM 5975 / JCM 20966 / LMG 6465 / NBRC 14845 / NCIMB 13405 / ORS 571).